The sequence spans 359 residues: Guanine nucleotide-binding protein subunit alpha-11 (359 aa).

2 S-palmitoyl cysteine lipidation sites follow: Cys-9 and Cys-10. In terms of domain architecture, G-alpha spans 38–359; that stretch reads RELKLLLLGT…QLNLKEYNLV (322 aa). A G1 motif region spans residues 41 to 54; that stretch reads KLLLLGTGESGKST. Residues 46-53 and 180-183 each bind GTP; these read GTGESGKS and LRVR. Ser-53 is a Mg(2+) binding site. Residues 178–186 form a G2 motif region; that stretch reads DVLRVRVPT. Thr-186 contributes to the Mg(2+) binding site. A G3 motif region spans residues 201 to 210; the sequence is FRMVDVGGQR. The residue at position 209 (Gln-209) is a Deamidated glutamine; by Photorhabdus PAU_02230. The interval 270–277 is G4 motif; sequence ILFLNKKD. Residues 274–277 and Ala-331 contribute to the GTP site; that span reads NKKD. A G5 motif region spans residues 329-334; it reads TCATDT.

Belongs to the G-alpha family. G(q) subfamily. In terms of assembly, g proteins are composed of 3 units; alpha, beta and gamma. The alpha chain contains the guanine nucleotide binding site. Interacts with RGS22. Interacts with NTSR1. As to quaternary structure, (Microbial infection) Interacts with human cytomegalovirus (HHV-5) US28. (Microbial infection) Deamidated at Gln-209 by Photorhabdus asymbiotica toxin PAU_02230, blocking GTP hydrolysis of heterotrimeric GNAQ or GNA11 and G-alphai (GNAI1, GNAI2 or GNAI3) proteins, thereby activating RhoA. As to expression, expressed in testis.

Its subcellular location is the cell membrane. It is found in the cytoplasm. The enzyme catalyses GTP + H2O = GDP + phosphate + H(+). Guanine nucleotide-binding proteins (G proteins) function as transducers downstream of G protein-coupled receptors (GPCRs) in numerous signaling cascades. The alpha chain contains the guanine nucleotide binding site and alternates between an active, GTP-bound state and an inactive, GDP-bound state. Signaling by an activated GPCR promotes GDP release and GTP binding. The alpha subunit has a low GTPase activity that converts bound GTP to GDP, thereby terminating the signal. Both GDP release and GTP hydrolysis are modulated by numerous regulatory proteins. Signaling is mediated via phospholipase C-beta-dependent inositol lipid hydrolysis for signal propagation: activates phospholipase C-beta: following GPCR activation, GNA11 activates PLC-beta (PLCB1, PLCB2, PLCB3 or PLCB4), leading to production of diacylglycerol (DAG) and inositol 1,4,5-trisphosphate (IP3). Transduces FFAR4 signaling in response to long-chain fatty acids (LCFAs). Together with GNAQ, required for heart development. In the respiratory epithelium, transmits OXGR1-dependent signals that lead to downstream intracellular Ca(2+) release and mucocilliary clearance of airborne pathogens. The chain is Guanine nucleotide-binding protein subunit alpha-11 (GNA11) from Homo sapiens (Human).